The primary structure comprises 258 residues: Acyl-[acyl-carrier-protein]--UDP-N-acetylglucosamine O-acyltransferase (258 aa).

Belongs to the transferase hexapeptide repeat family. LpxA subfamily. Homotrimer.

Its subcellular location is the cytoplasm. It carries out the reaction a (3R)-hydroxyacyl-[ACP] + UDP-N-acetyl-alpha-D-glucosamine = a UDP-3-O-[(3R)-3-hydroxyacyl]-N-acetyl-alpha-D-glucosamine + holo-[ACP]. It participates in glycolipid biosynthesis; lipid IV(A) biosynthesis; lipid IV(A) from (3R)-3-hydroxytetradecanoyl-[acyl-carrier-protein] and UDP-N-acetyl-alpha-D-glucosamine: step 1/6. Functionally, involved in the biosynthesis of lipid A, a phosphorylated glycolipid that anchors the lipopolysaccharide to the outer membrane of the cell. The protein is Acyl-[acyl-carrier-protein]--UDP-N-acetylglucosamine O-acyltransferase of Thiobacillus denitrificans (strain ATCC 25259 / T1).